A 354-amino-acid polypeptide reads, in one-letter code: Nicotinate-nucleotide--dimethylbenzimidazole phosphoribosyltransferase (354 aa).

Glutamate 317 serves as the catalytic Proton acceptor.

The protein belongs to the CobT family. As to quaternary structure, homodimer.

It carries out the reaction 5,6-dimethylbenzimidazole + nicotinate beta-D-ribonucleotide = alpha-ribazole 5'-phosphate + nicotinate + H(+). It functions in the pathway nucleoside biosynthesis; alpha-ribazole biosynthesis; alpha-ribazole from 5,6-dimethylbenzimidazole: step 1/2. Catalyzes the synthesis of alpha-ribazole-5'-phosphate from nicotinate mononucleotide (NAMN) and 5,6-dimethylbenzimidazole (DMB). This chain is Nicotinate-nucleotide--dimethylbenzimidazole phosphoribosyltransferase, found in Salmonella arizonae (strain ATCC BAA-731 / CDC346-86 / RSK2980).